A 427-amino-acid chain; its full sequence is Trigger factor (427 aa).

In terms of domain architecture, PPIase FKBP-type spans 160-240; that stretch reads TDTVIGDVVK…VKEVKRLELP (81 aa).

Belongs to the FKBP-type PPIase family. Tig subfamily.

The protein localises to the cytoplasm. The catalysed reaction is [protein]-peptidylproline (omega=180) = [protein]-peptidylproline (omega=0). Functionally, involved in protein export. Acts as a chaperone by maintaining the newly synthesized protein in an open conformation. Functions as a peptidyl-prolyl cis-trans isomerase. This chain is Trigger factor, found in Chlorobium limicola (strain DSM 245 / NBRC 103803 / 6330).